The following is a 157-amino-acid chain: Endoribonuclease YbeY (157 aa).

Zn(2+) contacts are provided by His116, His120, and His126.

This sequence belongs to the endoribonuclease YbeY family. It depends on Zn(2+) as a cofactor.

The protein resides in the cytoplasm. Functionally, single strand-specific metallo-endoribonuclease involved in late-stage 70S ribosome quality control and in maturation of the 3' terminus of the 16S rRNA. The chain is Endoribonuclease YbeY from Arthrobacter sp. (strain FB24).